A 424-amino-acid polypeptide reads, in one-letter code: Adenylosuccinate synthetase (424 aa).

GTP-binding positions include 12 to 18 (GDEGKGK) and 40 to 42 (GHT). Catalysis depends on aspartate 13, which acts as the Proton acceptor. Mg(2+) contacts are provided by aspartate 13 and glycine 40. IMP contacts are provided by residues 13-16 (DEGK), 38-41 (NAGH), threonine 130, arginine 144, asparagine 220, threonine 235, and arginine 299. Histidine 41 serves as the catalytic Proton donor. A substrate-binding site is contributed by 295 to 301 (VTTGRRR). GTP is bound by residues arginine 301, 327–329 (KLD), and 412–414 (GTG).

This sequence belongs to the adenylosuccinate synthetase family. As to quaternary structure, homodimer. The cofactor is Mg(2+).

The protein localises to the cytoplasm. It carries out the reaction IMP + L-aspartate + GTP = N(6)-(1,2-dicarboxyethyl)-AMP + GDP + phosphate + 2 H(+). The protein operates within purine metabolism; AMP biosynthesis via de novo pathway; AMP from IMP: step 1/2. Functionally, plays an important role in the de novo pathway and in the salvage pathway of purine nucleotide biosynthesis. Catalyzes the first committed step in the biosynthesis of AMP from IMP. The polypeptide is Adenylosuccinate synthetase (Aspergillus clavatus (strain ATCC 1007 / CBS 513.65 / DSM 816 / NCTC 3887 / NRRL 1 / QM 1276 / 107)).